The sequence spans 195 residues: Apoptosis-associated speck-like protein containing a CARD (195 aa).

The 91-residue stretch at 1 to 91 folds into the Pyrin domain; it reads MGRARDAILD…AGQLQAATHQ (91 aa). Glycyl lysine isopeptide (Lys-Gly) (interchain with G-Cter in ubiquitin) cross-links involve residues lysine 55 and lysine 174. Residues 107–195 enclose the CARD domain; sequence AAKPGLHFID…SYLVEDLERS (89 aa). Residue serine 195 is modified to Phosphoserine.

Self-associates; enforced oligomerization induces apoptosis, NF-kappa-B regulation and interleukin-1 beta secretion. Homooligomers can form disk-like particles of approximately 12 nm diameter and approximately 1 nm height. Next to isoform 1, also isoform 2 and isoform 3 may be involved in oligomerization leading to functional regulation. Component of several inflammasomes containing one pattern recognition receptor/sensor, such as NLRP1, NLRP2, NLRP3, NLRP6, NLRC4, AIM2, MEFV or NOD2, and probably NLRC4, NLRP12 or IFI16. Major component of the ASC pyroptosome, a 1-2 um supramolecular assembly (one per macrophage cell) which consists of oligomerized PYCARD dimers and CASP1. Interacts with CASP1 (precursor form); the interaction induces activation of CASP1 leading to the processing of interleukin-1 beta; PYCARD competes with RIPK2 for binding to CASP1. Interacts with NLRP3; the interaction requires the homooligomerization of NLRP3. Interacts with NLRP2, NLRC4, MEFV, CARD16, AIM2, IFI16, NOD2, RIGI, RIPK2, PYDC1, PYDC2, NLRP10, CASP8, CHUK, IKBKB and BAX. Component of the AIM2 PANoptosome complex, a multiprotein complex that drives inflammatory cell death (PANoptosis). Phosphorylated. Post-translationally, 'Lys-63'-linked polyubiquitination by TRAF3 is critical for speck formation and inflammasome activation. 'Lys-63'-linked deubiquitinated by USP50; a crucial step for NLRP3-mediated inflammasome activation. 'Lys-63'-linked polyubiquitination by PELI1 is also critical for speck formation and inflammasome activation. Deubiquitinated by USP3 that cleaves 'Lys-48'-linked ubiquitin chains and strengthens its stability by blocking proteasomal degradation. As to expression, widely expressed at low levels. Detected in peripheral blood leukocytes, lung, small intestine, spleen, thymus, colon and at lower levels in placenta, liver and kidney. Very low expression in skeletal muscle, heart and brain. Expressed in lung epithelial cells (at protein level). Detected in the leukemia cell lines HL-60 and U-937, but not in Jurkat T-cell lymphoma and Daudi Burkitt's lymphoma. Detected in the melanoma cell line WM35, but not in WM793. Not detected in HeLa cervical carcinoma cells and MOLT-4 lymphocytic leukemia cells.

Its subcellular location is the cytoplasm. It localises to the inflammasome. The protein localises to the endoplasmic reticulum. It is found in the mitochondrion. The protein resides in the nucleus. Its subcellular location is the golgi apparatus membrane. Its function is as follows. Functions as a key mediator in apoptosis and inflammation. Promotes caspase-mediated apoptosis involving predominantly caspase-8 and also caspase-9 in a probable cell type-specific manner. Involved in activation of the mitochondrial apoptotic pathway, promotes caspase-8-dependent proteolytic maturation of BID independently of FADD in certain cell types and also mediates mitochondrial translocation of BAX and activates BAX-dependent apoptosis coupled to activation of caspase-9, -2 and -3. Involved in innate immune response by acting as an integral adapter in the assembly of various inflammasomes (NLRP1, NLRP2, NLRP3, NLRP6, AIM2 and probably IFI16) which recruit and activate caspase-1 leading to processing and secretion of pro-inflammatory cytokines. Caspase-1-dependent inflammation leads to macrophage pyroptosis, a form of cell death. The function as activating adapter in different types of inflammasomes is mediated by the pyrin and CARD domains and their homotypic interactions. Clustered PYCARD nucleates the formation of caspase-1 filaments through the interaction of their respective CARD domains, acting as a platform for of caspase-1 polymerization. In the NLRP1 and NLRC4 inflammasomes seems not be required but facilitates the processing of procaspase-1. In cooperation with NOD2 involved in an inflammasome activated by bacterial muramyl dipeptide leading to caspase-1 activation. May be involved in RIGI-triggered pro-inflammatory responses and inflammasome activation. In collaboration with AIM2 which detects cytosolic double-stranded DNA may also be involved in a caspase-1-independent cell death that involves caspase-8. In adaptive immunity may be involved in maturation of dendritic cells to stimulate T-cell immunity and in cytoskeletal rearrangements coupled to chemotaxis and antigen uptake may be involved in post-transcriptional regulation of the guanine nucleotide exchange factor DOCK2; the latter function is proposed to involve the nuclear form. Also involved in transcriptional activation of cytokines and chemokines independent of the inflammasome; this function may involve AP-1, NF-kappa-B, MAPK and caspase-8 signaling pathways. For regulation of NF-kappa-B activating and inhibiting functions have been reported. Modulates NF-kappa-B induction at the level of the IKK complex by inhibiting kinase activity of CHUK and IKBK. Proposed to compete with RIPK2 for association with CASP1 thereby down-regulating CASP1-mediated RIPK2-dependent NF-kappa-B activation and activating interleukin-1 beta processing. Modulates host resistance to DNA virus infection, probably by inducing the cleavage of and inactivating CGAS in presence of cytoplasmic double-stranded DNA. Functionally, may have a regulating effect on the function as inflammasome adapter. In terms of biological role, seems to inhibit inflammasome-mediated maturation of interleukin-1 beta. This Homo sapiens (Human) protein is Apoptosis-associated speck-like protein containing a CARD.